The sequence spans 373 residues: Mating-type protein A-2 (373 aa).

The interval 1–22 is disordered; the sequence is MNLLNMQPKRSEQPAMFEENRA.

It to P.anserina SMR1.

In terms of biological role, required, together with mating-type protein A-3, for efficient ascospore formation. The protein is Mating-type protein A-2 (matA-2) of Neurospora crassa (strain ATCC 24698 / 74-OR23-1A / CBS 708.71 / DSM 1257 / FGSC 987).